The following is a 690-amino-acid chain: UvrABC system protein C (690 aa).

Residues 1 to 60 form a disordered region; the sequence is MTTDSSDPAKPAGPGQPPGSGADTRPGGLATGQDVDPATIETDEDDEARLPDVPDEPTDA. The segment covering 41–58 has biased composition (acidic residues); the sequence is ETDEDDEARLPDVPDEPT. The GIY-YIG domain occupies 82 to 160; that stretch reads TSPGVYRMMN…IKQLRPRFNV (79 aa). Residues 270–305 enclose the UVR domain; that stretch reads RAVKEELAREMEKASGDLAFERAALYRDRLAALSAI.

This sequence belongs to the UvrC family. In terms of assembly, interacts with UvrB in an incision complex.

The protein resides in the cytoplasm. In terms of biological role, the UvrABC repair system catalyzes the recognition and processing of DNA lesions. UvrC both incises the 5' and 3' sides of the lesion. The N-terminal half is responsible for the 3' incision and the C-terminal half is responsible for the 5' incision. This Nitrobacter hamburgensis (strain DSM 10229 / NCIMB 13809 / X14) protein is UvrABC system protein C.